Here is a 651-residue protein sequence, read N- to C-terminus: Protein numb homolog (651 aa).

The PID domain maps to 33–193 (RTGKCSFPVK…ASRTTFTREG (161 aa)). Threonine 102 carries the phosphothreonine; by AAK1 modification. Serine 194 carries the post-translational modification Phosphoserine. Residues 228–255 (SSVAPGNTAPSPSSPTSPTSDATTSLEM) are disordered. A compositionally biased stretch (low complexity) spans 235-252 (TAPSPSSPTSPTSDATTS). Phosphothreonine is present on threonine 243. At serine 244 the chain carries Phosphoserine. Phosphoserine; by CaMK1 occurs at positions 276 and 295. Disordered regions lie at residues 419–483 (QSSG…SPFQ) and 623–651 (LENK…EIEL). A Phosphoserine modification is found at serine 425. Threonine 436 carries the post-translational modification Phosphothreonine. The segment covering 436-449 (TPSEADRWLEEVSK) has biased composition (basic and acidic residues). Residue serine 438 is modified to Phosphoserine. Residues 453–466 (AQQPQASAAPLQPV) are compositionally biased toward low complexity. Polar residues predominate over residues 630 to 644 (RTNPSPTNPFSSDLQ). Serine 634 carries the phosphoserine modification.

As to quaternary structure, interacts with SIAH1. Interacts with LNX. Interacts with CDH1. Interacts with TFAP2A and TFAP2B. Interacts with RALBP1 in a complex also containing EPN1 and TFAP2A during interphase and mitosis. Interacts with AAK1. May interact with DUOXA1. Phosphorylated on Ser-276 and Ser-295 by CaMK1. In terms of processing, isoform 1 and isoform 2 are ubiquitinated by LNX leading to their subsequent proteasomal degradation. Ubiquitinated; mediated by SIAH1 and leading to its subsequent proteasomal degradation.

It is found in the cell membrane. It localises to the endosome membrane. Functionally, regulates clathrin-mediated receptor endocytosis. Plays a role in the process of neurogenesis. Required throughout embryonic neurogenesis to maintain neural progenitor cells, also called radial glial cells (RGCs), by allowing their daughter cells to choose progenitor over neuronal cell fate. Not required for the proliferation of neural progenitor cells before the onset of neurogenesis. Also involved postnatally in the subventricular zone (SVZ) neurogenesis by regulating SVZ neuroblasts survival and ependymal wall integrity. May also mediate local repair of brain ventricular wall damage. In Homo sapiens (Human), this protein is Protein numb homolog.